Consider the following 88-residue polypeptide: Small muscular protein (88 aa).

The segment at 22-66 (MGAFRPGAGQPPRRKECTPEVEEGVPPTSDEEKKPIPGAKKLPGP) is disordered.

This sequence belongs to the SMPX family. In terms of tissue distribution, preferentially and abundantly expressed in heart and skeletal muscle.

Functionally, plays a role in the regulatory network through which muscle cells coordinate their structural and functional states during growth, adaptation, and repair. The chain is Small muscular protein (SMPX) from Homo sapiens (Human).